We begin with the raw amino-acid sequence, 263 residues long: Purine nucleoside phosphorylase SERP0752 (263 aa).

Residues histidine 79, cysteine 124, and histidine 141 each contribute to the Zn(2+) site.

It belongs to the purine nucleoside phosphorylase YfiH/LACC1 family. Homodimer. Requires Cu(2+) as cofactor. Zn(2+) serves as cofactor.

It carries out the reaction adenosine + phosphate = alpha-D-ribose 1-phosphate + adenine. The catalysed reaction is S-methyl-5'-thioadenosine + phosphate = 5-(methylsulfanyl)-alpha-D-ribose 1-phosphate + adenine. It catalyses the reaction inosine + phosphate = alpha-D-ribose 1-phosphate + hypoxanthine. The enzyme catalyses adenosine + H2O + H(+) = inosine + NH4(+). Purine nucleoside enzyme that catalyzes the phosphorolysis of adenosine and inosine nucleosides, yielding D-ribose 1-phosphate and the respective free bases, adenine and hypoxanthine. Also catalyzes the phosphorolysis of S-methyl-5'-thioadenosine into adenine and S-methyl-5-thio-alpha-D-ribose 1-phosphate. Also has adenosine deaminase activity. In Staphylococcus epidermidis (strain ATCC 35984 / DSM 28319 / BCRC 17069 / CCUG 31568 / BM 3577 / RP62A), this protein is Purine nucleoside phosphorylase SERP0752.